We begin with the raw amino-acid sequence, 450 residues long: Homogentisate 1,2-dioxygenase (450 aa).

Histidine 304 functions as the Proton acceptor in the catalytic mechanism. Residues histidine 347 and glutamate 353 each contribute to the Fe cation site. Residues tyrosine 362 and histidine 383 each coordinate homogentisate. Residue histidine 383 participates in Fe cation binding.

Belongs to the homogentisate dioxygenase family. Hexamer; dimer of trimers. Fe cation serves as cofactor.

The enzyme catalyses homogentisate + O2 = 4-maleylacetoacetate + H(+). It participates in amino-acid degradation; L-phenylalanine degradation; acetoacetate and fumarate from L-phenylalanine: step 4/6. Involved in the catabolism of homogentisate (2,5-dihydroxyphenylacetate or 2,5-OH-PhAc), a central intermediate in the degradation of phenylalanine and tyrosine. Catalyzes the oxidative ring cleavage of the aromatic ring of homogentisate to yield maleylacetoacetate. The polypeptide is Homogentisate 1,2-dioxygenase (Burkholderia mallei (strain NCTC 10229)).